The chain runs to 562 residues: Protein wntless (562 aa).

Topologically, residues 1 to 15 (MSGTILENLSGRKLS) are cytoplasmic. The helical transmembrane segment at 16 to 36 (ILVSSLMLCQVVCFLMGGLFA) threads the bilayer. Residues 37-239 (PVPAGHQTVL…AIHQNGGFTQ (203 aa)) lie on the Lumenal side of the membrane. 2 N-linked (GlcNAc...) asparagine glycosylation sites follow: Asn58 and Asn103. Residues 240–260 (VWLVLKTLLFPFVIGIMMWFW) traverse the membrane as a helical segment. Over 261 to 275 (RRVHILQRSPALLEY) the chain is Cytoplasmic. The helical transmembrane segment at 276–296 (MLFYLGGALSFLNLPLELLTL) threads the bilayer. The Lumenal segment spans residues 297–311 (GVEMPYMLLLSDVRQ). The helical transmembrane segment at 312-332 (GIFYAMLLSFWLVFAGEHMLI) threads the bilayer. Residues 333-344 (QDSPSKSTIRSR) lie on the Cytoplasmic side of the membrane. Residues 345 to 365 (YWKHLSAVVVGCISLFVFDIC) traverse the membrane as a helical segment. Topologically, residues 366–390 (ERGVQMRNPFYSIWTTPLGAKVAMS) are lumenal. Residues 391–411 (FIVLAGVSAAIYFLFLCFMVW) form a helical membrane-spanning segment. Residues 412-441 (KVFKDIGDKRTSLPSMSQARRLHYEGLIYR) are Cytoplasmic-facing. The chain crosses the membrane as a helical span at residues 442–462 (FKFLMLATLLCAGLTVAGFIM). Over 463-482 (GQMAEGHWKWNENIEIQLTS) the chain is Lumenal. Residues 483-503 (AFLTGVYGMWNIYIFALIILY) traverse the membrane as a helical segment. At 504 to 562 (APSHKQWPTMRHSDETTQSNENIVASAASEEIEFSNLPSDSNPSEISSLTSFTRKVAFD) the chain is on the cytoplasmic side.

This sequence belongs to the wntless family. Interacts with wg; in the Golgi. Interacts with Vps35, a component of the retromer complex; wls stability is regulated by Vps35.

Its subcellular location is the presynaptic cell membrane. The protein localises to the postsynaptic cell membrane. It localises to the cell membrane. It is found in the endoplasmic reticulum membrane. The protein resides in the endosome membrane. Its subcellular location is the golgi apparatus membrane. Functionally, a segment polarity gene required for wingless (wg)-dependent patterning processes, acting in both wg-sending cells and wg-target cells. In non-neuronal cells wls directs wg secretion. The wls traffic loop encompasses the Golgi, the cell surface, an endocytic compartment and a retrograde route leading back to the Golgi, and involves clathrin-mediated endocytosis and the retromer complex (a conserved protein complex consisting of Vps35 and Vps26). In neuronal cells (the larval motorneuron NMJ), the wg signal moves across the synapse via the release of wls-containing exosome-like vesicles. Postsynaptic wls is required for the trafficking of fz2 through the fz2-interacting protein Grip. In Drosophila grimshawi (Hawaiian fruit fly), this protein is Protein wntless.